A 275-amino-acid chain; its full sequence is MNTSHYSVLGHAVPYPKAYDPSLLFPISRAVGRAQIGIGVVLPFVGEDRWHAYELSWLDARGKPCVATATFHVPCDSPYLIESKSLKLYLNSFSAEVFNRAEALRLRIAADLSACAGAAVAVEFGLPPVGGGDKEISLDRLNVDIEDYGPPNPDYLSNVAQNLIEEMVEETLTSTLFKSNCPVTGQPDWASVTVRYFGVPIDHEGLLRYFISFRHHAEFHEQCVERIFQDVLQRCSPQCLAVEARYTRRGGLDINPLRTTSEMAWPISVFRDPRQ.

A substrate-binding site is contributed by 81–83 (IES). 83 to 84 (SK) contributes to the NADPH binding site. The Thioimide intermediate role is filled by Cys-181. Catalysis depends on Asp-188, which acts as the Proton donor. Residue 220–221 (HE) coordinates substrate. 249–250 (RG) lines the NADPH pocket.

It belongs to the GTP cyclohydrolase I family. QueF type 2 subfamily. As to quaternary structure, homodimer.

Its subcellular location is the cytoplasm. It carries out the reaction 7-aminomethyl-7-carbaguanine + 2 NADP(+) = 7-cyano-7-deazaguanine + 2 NADPH + 3 H(+). The protein operates within tRNA modification; tRNA-queuosine biosynthesis. Functionally, catalyzes the NADPH-dependent reduction of 7-cyano-7-deazaguanine (preQ0) to 7-aminomethyl-7-deazaguanine (preQ1). The chain is NADPH-dependent 7-cyano-7-deazaguanine reductase from Xylella fastidiosa (strain 9a5c).